The chain runs to 153 residues: MKTSIVERPAQHWVGYRLQGPWQETVPQGFAQLKDWVARHALQGEWMAIYYGNPQVVPPQELSVETVLTVPADFALAVGEGIQHGTLAGGHYFHTCTEVQNNDFFSAWNAFFAQLQQRSDWQVDDRPCYEHYLSDGSQSGNWLLNMYIPVRPV.

This sequence belongs to the DNA gyrase inhibitor family. In terms of assembly, interacts with DNA gyrase.

It localises to the cytoplasm. In terms of biological role, inhibits the supercoiling activity of DNA gyrase. Acts by inhibiting DNA gyrase at an early step, prior to (or at the step of) binding of DNA by the gyrase. It protects cells against toxins that target DNA gyrase, by inhibiting activity of these toxins and reducing the formation of lethal double-strand breaks in the cell. In Pantoea sp. (strain At-9b), this protein is DNA gyrase inhibitor.